The following is a 181-amino-acid chain: Nucleoside diphosphate kinase, mitochondrial (181 aa).

Residues 1–10 (MFRGGTHRLR) show a composition bias toward basic residues. Residues 1–22 (MFRGGTHRLRGQPGLSLPHGPR) form a disordered region. Residues 1-24 (MFRGGTHRLRGQPGLSLPHGPRCY) constitute a mitochondrion transit peptide. ATP-binding residues include Lys40, Phe88, Arg116, Thr122, Arg133, and Asn143. Catalysis depends on His146, which acts as the Pros-phosphohistidine intermediate.

The protein belongs to the NDK family. Requires Mg(2+) as cofactor. Highest levels in the liver and kidney with lower levels in the heart, brain and breast muscle.

The protein resides in the mitochondrion intermembrane space. It localises to the mitochondrion matrix. It catalyses the reaction a 2'-deoxyribonucleoside 5'-diphosphate + ATP = a 2'-deoxyribonucleoside 5'-triphosphate + ADP. The catalysed reaction is a ribonucleoside 5'-diphosphate + ATP = a ribonucleoside 5'-triphosphate + ADP. Feedback inhibition by ADP. Major role in the synthesis of nucleoside triphosphates other than ATP. The ATP gamma phosphate is transferred to the NDP beta phosphate via a ping-pong mechanism, using a phosphorylated active-site intermediate. Through the catalyzed exchange of gamma-phosphate between di- and triphosphonucleosides participates in regulation of intracellular nucleotide homeostasis. Binds to anionic phospholipids, predominantly to cardiolipin; the binding inhibits its phosphotransfer activity. Acts as a mitochondria-specific NDK coupled to respiration. Promotes the redistribution of cardiolipin between the mitochondrial inner membrane and outer membrane which is implicated in pro-apoptotic signaling. The protein is Nucleoside diphosphate kinase, mitochondrial (NME4) of Columba livia (Rock dove).